Reading from the N-terminus, the 512-residue chain is MIGEERVVRALMSVYDKTGIVEFAQALHNLGIEIISTGQTQRVLREAGIPALPVSDVTGFPEILDGRVKTLHPAIHAGLLARRDVPAHMAELAAHNLQPIDLVVVNLYPFAATIARPDVTMAEAQEQIDIGGVALLRAAAKNFPAVLVLVDPADYAGVLDGLRAGDVPLSERQRLAAKAFAHTAEYDATIAAYLRTEPLPDVLPLAWRKYQPLRYGENPHQAAALYGDFGAFFHQLHGKELSYNNILDTAAAQELIEEFPATEAAAVAIIKHTNPCGVAIAADLHRAWEAAFATDREAPFGGIIAVNRPVDIAFAEAVDEIFSEIIIAPDFAPDALALLRRKKNRRLLQSVRPITGADRWQLRSVPGGVLVQEPDHAPLVAEEWRVVTKRAPTDAEAAALRFAWRVVKHVKSNAIVYAAHDRTLGIGAGQMSRVDSSRLAVWKAQQAGIDLRGSVVASDALFPFADGVEAAIAAGATAIIQPGGSVRDEEVIAAADAAGAAMVFTGRRHFRH.

One can recognise an MGS-like domain in the interval 1-150; it reads MIGEERVVRA…KNFPAVLVLV (150 aa).

Belongs to the PurH family.

The catalysed reaction is (6R)-10-formyltetrahydrofolate + 5-amino-1-(5-phospho-beta-D-ribosyl)imidazole-4-carboxamide = 5-formamido-1-(5-phospho-D-ribosyl)imidazole-4-carboxamide + (6S)-5,6,7,8-tetrahydrofolate. It carries out the reaction IMP + H2O = 5-formamido-1-(5-phospho-D-ribosyl)imidazole-4-carboxamide. It functions in the pathway purine metabolism; IMP biosynthesis via de novo pathway; 5-formamido-1-(5-phospho-D-ribosyl)imidazole-4-carboxamide from 5-amino-1-(5-phospho-D-ribosyl)imidazole-4-carboxamide (10-formyl THF route): step 1/1. The protein operates within purine metabolism; IMP biosynthesis via de novo pathway; IMP from 5-formamido-1-(5-phospho-D-ribosyl)imidazole-4-carboxamide: step 1/1. This Chloroflexus aurantiacus (strain ATCC 29366 / DSM 635 / J-10-fl) protein is Bifunctional purine biosynthesis protein PurH.